Reading from the N-terminus, the 363-residue chain is Caffeic acid 3-O-methyltransferase (363 aa).

130 to 136 serves as a coordination point for substrate; it reads MNQDKVL. Positions 162-180 are substrate binding; sequence AFEYHGKDPRFNKVFNQGM. Gly208, Asp231, Asp251, Met252, and Lys265 together coordinate S-adenosyl-L-methionine. The active-site Proton acceptor is the His269.

Belongs to the class I-like SAM-binding methyltransferase superfamily. Cation-independent O-methyltransferase family. COMT subfamily. In terms of assembly, homodimer.

It catalyses the reaction (E)-caffeate + S-adenosyl-L-methionine = (E)-ferulate + S-adenosyl-L-homocysteine + H(+). Its pathway is aromatic compound metabolism; phenylpropanoid biosynthesis. Functionally, catalyzes the conversion of caffeic acid to ferulic acid and of 5-hydroxyferulic acid to sinapic acid. The resulting products may subsequently be converted to the corresponding alcohols that are incorporated into lignins. The polypeptide is Caffeic acid 3-O-methyltransferase (COMT1) (Catharanthus roseus (Madagascar periwinkle)).